The following is a 71-amino-acid chain: UPF0346 protein MGAS2096_Spy0401 (71 aa).

Belongs to the UPF0346 family.

This Streptococcus pyogenes serotype M12 (strain MGAS2096) protein is UPF0346 protein MGAS2096_Spy0401.